Here is a 1441-residue protein sequence, read N- to C-terminus: Envelopment polyprotein (1441 aa).

The signal sequence occupies residues 1–13 (MICILVLITVAAA). Residues 14-200 (SPVYQRCFQD…GSIANSICQN (187 aa)) are Lumenal-facing. Asn-57 is a glycosylation site (N-linked (GlcNAc...) asparagine; by host). The hydrophobic stretch at 201–221 (IEIIILVTLTLLIFILLSILS) threads the membrane. Over 222-305 (KTYICYLLMP…RAARVMCKSK (84 aa)) the chain is Cytoplasmic. A transmembrane span lies at residues 306–326 (GPASILSIITAVLVLTFVTPI). The Lumenal portion of the chain corresponds to 327–361 (NSMVLGESKETFELEDLPDDMLEMASRINSYYLTC). Positions 362–382 (ILNYAVSWGLVIIGLLIGLLF) form a transmembrane segment. Residues 383 to 450 (KKYQHRFLNV…NCLVQYKAKW (68 aa)) are Cytoplasmic-facing. Residues 451–471 (MMNFLIIYIFLILIKDSAIVV) are membrane-embedded. Residues 472–1395 (QAAGTDFTTC…EPFKNLFGSY (924 aa)) are Lumenal-facing. N-linked (GlcNAc...) asparagine; by host glycosylation occurs at Asn-490. The interval 1066-1087 (WGCEEFGCLAVSDGCVFGSCQD) is fusion peptide. N-linked (GlcNAc...) asparagine; by host glycosylation is present at Asn-1177. A membrane pass occupies residues 1396–1416 (IGIFYTFIISIVVLLVIIYVL). Residues 1417-1433 (LPICFKLRDTLRKHEDA) lie on the Cytoplasmic side of the membrane.

The protein belongs to the orthobunyaviruses M polyprotein family. As to quaternary structure, glycoprotein C and Glycoprotein N interact with each other.

It is found in the virion membrane. The protein resides in the host Golgi apparatus membrane. It localises to the host endoplasmic reticulum membrane. Functionally, glycoprotein C and glycoprotein N interact with each other and are present at the surface of the virion. They are able to attach the virion to a cell receptor and to promote fusion of membranes after endocytosis of the virion. This Bunyavirus La Crosse (isolate Human/United States/L78/1978) protein is Envelopment polyprotein (GP).